We begin with the raw amino-acid sequence, 280 residues long: Intimin (280 aa).

Residues 1-92 (ITEIKADKTT…MLKLLEVEFF (92 aa)) form the Big-1 domain. Positions 127-173 (ANGGNGKYTWYSANPAIASVDPSSGQVTLKDKGETTITVVSGDKQTA) constitute a BIG2 domain. Cysteines 201 and 278 form a disulfide.

This sequence belongs to the intimin/invasin family.

The protein resides in the cell outer membrane. In terms of biological role, an inverse autotransporter. In Hafnia alvei, this protein is Intimin (eaeA).